Here is a 126-residue protein sequence, read N- to C-terminus: Large ribosomal subunit protein bL12 (126 aa).

It belongs to the bacterial ribosomal protein bL12 family. As to quaternary structure, homodimer. Part of the ribosomal stalk of the 50S ribosomal subunit. Forms a multimeric L10(L12)X complex, where L10 forms an elongated spine to which 2 to 4 L12 dimers bind in a sequential fashion. Binds GTP-bound translation factors.

In terms of biological role, forms part of the ribosomal stalk which helps the ribosome interact with GTP-bound translation factors. Is thus essential for accurate translation. The chain is Large ribosomal subunit protein bL12 from Bifidobacterium longum (strain DJO10A).